A 169-amino-acid polypeptide reads, in one-letter code: Neurotensin/neuromedin N (169 aa).

The first 22 residues, 1–22 (MRGMNLQLVCLTLLAFSSWSLC), serve as a signal peptide directing secretion.

It belongs to the neurotensin family. In terms of assembly, interacts with NTSR1. Interacts with SORT1. Interacts with SORL1. Post-translationally, neurotensin is cleaved and degraded by Angiotensin-converting enzyme (ACE) and neprilysin (MME).

It is found in the secreted. The protein resides in the cytoplasmic vesicle. Its subcellular location is the secretory vesicle. Neurotensin may play an endocrine or paracrine role in the regulation of fat metabolism. It causes contraction of smooth muscle. This Mus musculus (Mouse) protein is Neurotensin/neuromedin N (Nts).